A 428-amino-acid chain; its full sequence is Protein CLP1 homolog (428 aa).

ATP contacts are provided by residues E22, K63, and 127 to 132; that span reads DVGKST.

It belongs to the Clp1 family. Clp1 subfamily.

The protein localises to the nucleus. Functionally, required for endonucleolytic cleavage during polyadenylation-dependent pre-mRNA 3'-end formation. The chain is Protein CLP1 homolog from Nematostella vectensis (Starlet sea anemone).